Reading from the N-terminus, the 1233-residue chain is ATP-dependent helicase/nuclease subunit A (1233 aa).

Positions 3 to 474 constitute a UvrD-like helicase ATP-binding domain; the sequence is TKWTEEQKQA…ILLYKNFRSR (472 aa). 24-31 is an ATP binding site; it reads AAAGSGKT. In terms of domain architecture, UvrD-like helicase C-terminal spans 518-809; sequence VTGGAVELHL…RIMSIHKSKG (292 aa). Positions 533–555 are disordered; sequence VEEEVEEKEEEKNEEKDFEEEEE.

Belongs to the helicase family. AddA subfamily. Heterodimer of AddA and AddB/RexB. The cofactor is Mg(2+).

The enzyme catalyses Couples ATP hydrolysis with the unwinding of duplex DNA by translocating in the 3'-5' direction.. It catalyses the reaction ATP + H2O = ADP + phosphate + H(+). Functionally, the heterodimer acts as both an ATP-dependent DNA helicase and an ATP-dependent, dual-direction single-stranded exonuclease. Recognizes the chi site generating a DNA molecule suitable for the initiation of homologous recombination. The AddA nuclease domain is required for chi fragment generation; this subunit has the helicase and 3' -&gt; 5' nuclease activities. This Thermoanaerobacter sp. (strain X514) protein is ATP-dependent helicase/nuclease subunit A.